The following is a 904-amino-acid chain: Envelope glycoprotein B (904 aa).

The signal sequence occupies residues 1–30; it reads MRQGAPARGCRWFVVWALLGLTLGVLVASA. A compositionally biased stretch (low complexity) spans 31 to 65; the sequence is APSSPGTPGVAAATQAANGGPATPAPPALGAAPTG. The disordered stretch occupies residues 31–88; the sequence is APSSPGTPGVAAATQAANGGPATPAPPALGAAPTGDPKPKKNKKPKNPTPPRPAGDNA. Residues 31–774 lie on the Virion surface side of the membrane; the sequence is APSSPGTPGV…SGVSSFMSNP (744 aa). N87 and N141 each carry an N-linked (GlcNAc...) asparagine; by host glycan. 5 disulfide bridges follow: C116-C573, C133-C529, C207-C271, C364-C412, and C596-C633. Involved in fusion and/or binding to host membrane stretches follow at residues 173-179 and 258-265; these read VWFGHRY and RVEAFHRY. Residues N398 and N430 are each glycosylated (N-linked (GlcNAc...) asparagine; by host). The interval 470 to 492 is disordered; it reads REQSRKPPNPTPPPPGASANASV. Over residues 476–485 the composition is skewed to pro residues; it reads PPNPTPPPPG. N489 is a glycosylation site (N-linked (GlcNAc...) asparagine; by host). N674 carries N-linked (GlcNAc...) asparagine; by host glycosylation. Residues 719-772 form a hydrophobic membrane proximal region region; it reads IDTVIHADANAAMFAGLGAFFEGMGDLGRAVGKVVMGIVGGVVSAVSGVSSFMS. The chain crosses the membrane as a helical span at residues 775-795; the sequence is FGALAVGLLVLAGLAAAFFAF. The Intravirion segment spans residues 796 to 904; it reads RYVMRLQSNP…KDGDADEDDL (109 aa). The short motif at 849–852 is the Golgi targeting element; sequence YMAL. The disordered stretch occupies residues 883 to 904; that stretch reads KRRNTNYTQVPNKDGDADEDDL. The Internalization motif motif lies at 889–892; it reads YTQV.

The protein belongs to the herpesviridae glycoprotein B family. In terms of assembly, homotrimer; disulfide-linked. Interacts with host receptor MYH9/NMMHC-IIA. Interacts with host receptor MYH10/NMMHC-IIB. Binds to heparan sulfate proteoglycans. Interacts with gH/gL heterodimer. Post-translationally, the cytoplasmic tail is phosphorylated by the viral kinase US3. Phosphorylation may be linked to a down-regulation of gB expression on cell surface. In terms of processing, ubiquitinated.

It is found in the virion membrane. Its subcellular location is the host cell membrane. It localises to the host endosome membrane. The protein localises to the host Golgi apparatus membrane. Its function is as follows. Envelope glycoprotein that forms spikes at the surface of virion envelope and binds to the host cell entry receptors MYH9/NMMHC-IIA and MYH10/NMMHC-IIB, promoting the virus entry into host cells. Essential for the initial attachment to heparan sulfate moieties of the host cell surface proteoglycans. Involved in fusion of viral and cellular membranes leading to virus entry into the host cell: following initial binding to its host cell entry receptors, membrane fusion is mediated by the fusion machinery composed at least of gB and the heterodimer gH/gL. May be involved in the fusion between the virion envelope and the outer nuclear membrane during virion egress. Also plays a role, together with gK, in virus-induced cell-to-cell fusion (syncytia formation). This chain is Envelope glycoprotein B, found in Homo sapiens (Human).